The primary structure comprises 446 residues: GTPase Der (446 aa).

EngA-type G domains lie at 3 to 168 (PVIA…YAGQ) and 181 to 354 (IKIA…KAAM). GTP is bound by residues 9–16 (GRPNVGKS), 57–61 (DTGGF), 120–123 (NKAE), 187–194 (GRPNVGKS), 234–238 (DTAGL), and 299–302 (NKWD). In terms of domain architecture, KH-like spans 355 to 439 (SKLPTPKLTR…PLRIEFRSST (85 aa)).

Belongs to the TRAFAC class TrmE-Era-EngA-EngB-Septin-like GTPase superfamily. EngA (Der) GTPase family. As to quaternary structure, associates with the 50S ribosomal subunit.

Functionally, GTPase that plays an essential role in the late steps of ribosome biogenesis. This Paraburkholderia phymatum (strain DSM 17167 / CIP 108236 / LMG 21445 / STM815) (Burkholderia phymatum) protein is GTPase Der.